The primary structure comprises 493 residues: Cobyric acid synthase (493 aa).

The GATase cobBQ-type domain occupies 246-440 (PIDIAVIKMP…IHGVFDGVAF (195 aa)). The Nucleophile role is filled by cysteine 326. Residue histidine 432 is part of the active site.

This sequence belongs to the CobB/CobQ family. CobQ subfamily.

The protein operates within cofactor biosynthesis; adenosylcobalamin biosynthesis. Catalyzes amidations at positions B, D, E, and G on adenosylcobyrinic A,C-diamide. NH(2) groups are provided by glutamine, and one molecule of ATP is hydrogenolyzed for each amidation. This chain is Cobyric acid synthase, found in Clostridium botulinum (strain Loch Maree / Type A3).